The chain runs to 545 residues: Chaperonin GroEL 2 (545 aa).

ATP is bound by residues 29 to 32 (TLGP), 86 to 90 (DGTTT), Gly414, and Asp499.

This sequence belongs to the chaperonin (HSP60) family. Forms a cylinder of 14 subunits composed of two heptameric rings stacked back-to-back. Interacts with the co-chaperonin GroES.

The protein localises to the cytoplasm. The catalysed reaction is ATP + H2O + a folded polypeptide = ADP + phosphate + an unfolded polypeptide.. Functionally, together with its co-chaperonin GroES, plays an essential role in assisting protein folding. The GroEL-GroES system forms a nano-cage that allows encapsulation of the non-native substrate proteins and provides a physical environment optimized to promote and accelerate protein folding. This is Chaperonin GroEL 2 from Chloroflexus aurantiacus (strain ATCC 29366 / DSM 635 / J-10-fl).